The following is a 223-amino-acid chain: Glucosyl-3-phosphoglycerate phosphatase (223 aa).

Arginine 10 lines the substrate pocket. Residue histidine 11 is the Tele-phosphohistidine intermediate of the active site. Lysine 47 is covalently cross-linked (Isoglutamyl lysine isopeptide (Lys-Gln) (interchain with Q-Cter in protein Pup)). Arginine 60 is a binding site for substrate. Residue glutamate 84 is the Proton donor/acceptor of the active site. A substrate-binding site is contributed by histidine 159.

This sequence belongs to the phosphoglycerate mutase family. As to quaternary structure, homodimer. Dimerization of the enzyme is essential for its dephosphorylation activity.

It carries out the reaction (2R)-2-O-(alpha-D-glucopyranosyl)-3-phospho-glycerate + H2O = (2R)-2-O-(alpha-D-glucopyranosyl)-glycerate + phosphate. It catalyses the reaction 2-O-(alpha-D-mannosyl)-3-phosphoglycerate + H2O = (2R)-2-O-(alpha-D-mannosyl)-glycerate + phosphate. The enzyme catalyses (2R)-2-O-[alpha-D-mannopyranosyl-(1-&gt;2)-alpha-D-glucopyranosyl]-3-phospho-glycerate + H2O = (2R)-2-O-[alpha-D-mannopyranosyl-(1-&gt;2)-alpha-D-glucopyranosyl]-glycerate + phosphate. With respect to regulation, progressively inhibited by cobalt ions at concentrations between 10-50 mM and by copper ions at any concentration between 1-50 mM. Involved in the biosynthesis of mycobacterial methylglucose lipopolysaccharides (MGLPs). Catalyzes the dephosphorylation of glucosyl-3-phosphoglycerate (GPG) to glucosylglycerate (GG). GPG is the preferred substrate, but GpgP also exhibits low dephosphorylation activity on mannosyl-3-phosphoglycerate (MPG) and mannosylglucosyl-3-phosphoglycerate (MGPG) in vitro. Shows only trace of phosphoglycerate mutase (PGM) activity. The sequence is that of Glucosyl-3-phosphoglycerate phosphatase from Mycobacterium tuberculosis (strain ATCC 25618 / H37Rv).